We begin with the raw amino-acid sequence, 319 residues long: Pectinesterase (319 aa).

Residue Q1 is modified to Pyrrolidone carboxylic acid. Substrate contacts are provided by T83 and Q113. D136 serves as the catalytic Proton donor. A disulfide bridge links C150 with C170. Residue D157 is the Nucleophile of the active site. R225 and W227 together coordinate substrate.

It belongs to the pectinesterase family.

The protein resides in the secreted. It is found in the cell wall. The catalysed reaction is [(1-&gt;4)-alpha-D-galacturonosyl methyl ester](n) + n H2O = [(1-&gt;4)-alpha-D-galacturonosyl](n) + n methanol + n H(+). Its pathway is glycan metabolism; pectin degradation; 2-dehydro-3-deoxy-D-gluconate from pectin: step 1/5. Catalyzes the deesterification of methyl-esterified D-galactosiduronic acid units in pectic compounds. It participates in modulating cell wall during fruit ripening, cell wall extension during pollen germination, and in defense mechanisms against pathogens. The protein is Pectinesterase of Daucus carota (Wild carrot).